Consider the following 901-residue polypeptide: Protein translocase subunit SecA (901 aa).

ATP-binding positions include Gln87, 105–109, and Asp512; that span reads GEGKT. The disordered stretch occupies residues 859–901; sequence HQDDDSAAAAALAAQTGERKVGRNDPCPCGSGKKYKQCHGRLQ. Positions 885, 887, 896, and 897 each coordinate Zn(2+). Over residues 891–901 the composition is skewed to basic residues; sequence KKYKQCHGRLQ.

Belongs to the SecA family. Monomer and homodimer. Part of the essential Sec protein translocation apparatus which comprises SecA, SecYEG and auxiliary proteins SecDF-YajC and YidC. Requires Zn(2+) as cofactor.

Its subcellular location is the cell inner membrane. The protein localises to the cytoplasm. It catalyses the reaction ATP + H2O + cellular proteinSide 1 = ADP + phosphate + cellular proteinSide 2.. Functionally, part of the Sec protein translocase complex. Interacts with the SecYEG preprotein conducting channel. Has a central role in coupling the hydrolysis of ATP to the transfer of proteins into and across the cell membrane, serving both as a receptor for the preprotein-SecB complex and as an ATP-driven molecular motor driving the stepwise translocation of polypeptide chains across the membrane. This Escherichia coli O139:H28 (strain E24377A / ETEC) protein is Protein translocase subunit SecA.